We begin with the raw amino-acid sequence, 207 residues long: LexA repressor (207 aa).

Residues 28–48 constitute a DNA-binding region (H-T-H motif); it reads VREIGEAVGLASSSTVHGHLS. Active-site for autocatalytic cleavage activity residues include Ser-130 and Lys-168.

It belongs to the peptidase S24 family. Homodimer.

The enzyme catalyses Hydrolysis of Ala-|-Gly bond in repressor LexA.. Its function is as follows. Represses a number of genes involved in the response to DNA damage (SOS response), including recA and lexA. In the presence of single-stranded DNA, RecA interacts with LexA causing an autocatalytic cleavage which disrupts the DNA-binding part of LexA, leading to derepression of the SOS regulon and eventually DNA repair. The polypeptide is LexA repressor (Staphylococcus haemolyticus (strain JCSC1435)).